The chain runs to 433 residues: GTPase Obg (433 aa).

The Obg domain maps to 4–162 (EDFVDRVTIF…RWLELELKLL (159 aa)). An OBG-type G domain is found at 163–334 (ADAGLIGFPN…LKQKIFEIVG (172 aa)). GTP contacts are provided by residues 169-176 (GFPNVGKS), 194-198 (FTTLV), 216-219 (DIPG), 286-289 (NKID), and 315-317 (SAL). Residues Ser176 and Thr196 each coordinate Mg(2+). The region spanning 356-433 (TKIEERFDFE…IGQYSFEYKE (78 aa)) is the OCT domain.

It belongs to the TRAFAC class OBG-HflX-like GTPase superfamily. OBG GTPase family. Monomer. Mg(2+) serves as cofactor.

It is found in the cytoplasm. An essential GTPase which binds GTP, GDP and possibly (p)ppGpp with moderate affinity, with high nucleotide exchange rates and a fairly low GTP hydrolysis rate. Plays a role in control of the cell cycle, stress response, ribosome biogenesis and in those bacteria that undergo differentiation, in morphogenesis control. The sequence is that of GTPase Obg from Pseudothermotoga lettingae (strain ATCC BAA-301 / DSM 14385 / NBRC 107922 / TMO) (Thermotoga lettingae).